The chain runs to 293 residues: Ribosomal protein L11 methyltransferase (293 aa).

Residues threonine 145, glycine 166, aspartate 188, and asparagine 229 each contribute to the S-adenosyl-L-methionine site.

Belongs to the methyltransferase superfamily. PrmA family.

It is found in the cytoplasm. The enzyme catalyses L-lysyl-[protein] + 3 S-adenosyl-L-methionine = N(6),N(6),N(6)-trimethyl-L-lysyl-[protein] + 3 S-adenosyl-L-homocysteine + 3 H(+). In terms of biological role, methylates ribosomal protein L11. The polypeptide is Ribosomal protein L11 methyltransferase (Idiomarina loihiensis (strain ATCC BAA-735 / DSM 15497 / L2-TR)).